The sequence spans 234 residues: Thymidine kinase, cytosolic (234 aa).

Phosphoserine is present on S13. ATP-binding positions include 26–33 (GPMFSGKS), 58–60 (DTR), and 97–100 (DEGQ). E98 (proton acceptor) is an active-site residue. F128 contacts substrate. Positions 153 and 156 each coordinate Zn(2+). Residues 172–176 (VEVIG) and Y181 contribute to the substrate site. 2 residues coordinate Zn(2+): C185 and C188. Positions 203–205 (KEN) match the KEN box motif.

Belongs to the thymidine kinase family. As to quaternary structure, homotetramer. Tetramerization from dimerization is induced by ATP and increases catalytic efficiency due to a high affinity for thymidine. Tetramerization is inhibited by phosphorylation at Ser-13. Interacts (via the KEN box) with FZR1. Post-translationally, phosphorylated on Ser-13 in mitosis. Phosphorylation of Ser-13 by CDK1 during mitosis reduces homotetramerization and catalytic efficiency when DNA replication is complete and intracellular TK1 is still present at a high level. Polyubiquitinated. Postmitosis, ubiquitination leads to proteasomal degradation. The KEN box sequence located at the C-terminal region targets for degradation by the anaphase promoting complex (APC/C) activated and rate-limited by FZR1.

The protein localises to the cytoplasm. The catalysed reaction is thymidine + ATP = dTMP + ADP + H(+). Its function is as follows. Cell-cycle-regulated enzyme of importance in nucleotide metabolism. Catalyzes the first enzymatic step in the salvage pathway converting thymidine into thymidine monophosphate. Transcriptional regulation limits expression to the S phase of the cell cycle and transient expression coincides with the oscillation in the intracellular dTTP concentration. This is Thymidine kinase, cytosolic (TK1) from Cricetulus griseus (Chinese hamster).